The following is a 56-amino-acid chain: Mitoregulin (56 aa).

Topologically, residues 2–9 are mitochondrial matrix; the sequence is ADVSERTL. The chain crosses the membrane as a helical span at residues 10 to 27; the sequence is QVSVLVAFASGVVLGWQA. The Mitochondrial intermembrane segment spans residues 28–56; the sequence is NRLRRRYLDWRKRRLQDKLATTQKKLDLA.

Belongs to the mitoregulin family. In terms of assembly, interacts with mitochondrial trifunctional enzyme, a heterotetrameric complex composed of 2 HADHA subunits and 2 HADHB subunits. Interacts with cytochrome b5 reductase CYB5R3; the interaction is required to maintain cellular lipid composition and leads to stimulation of mitochondrial respiratory complex I activity. Interacts with ATP synthase subunit ATP5F1B/ATP5B. As to expression, enriched in heart and skeletal muscle (at protein level). Also enriched in adipose tissue with lower levels detected in liver, pancreas and brain (at protein level). Higher levels in differentiated myotubes than in satellite cells.

It is found in the mitochondrion inner membrane. In terms of biological role, positively regulates mitochondrial complex assembly and/or stability. Increases mitochondrial membrane potential while decreasing mitochondrial reactive oxygen species. Increases mitochondrial respiration rate. Increased mitochondrial respiratory activity promotes myogenic differentiation which facilitates muscle growth and regeneration. Increases mitochondrial calcium retention capacity. Plays a role in maintenance of cellular lipid composition through its interaction with cytochrome b5 reductase CYB5R3 which is required for mitochondrial respiratory complex I activity. Interacts with the mitochondrial trifunctional enzyme complex (MTE) and enhances fatty acid beta-oxidation. Not required for MTE formation or stability. Modulates triglyceride clearance in adipocytes through its role in regulating fatty acid beta-oxidation and lipolysis. The chain is Mitoregulin from Mus musculus (Mouse).